We begin with the raw amino-acid sequence, 251 residues long: Pyrroloquinoline-quinone synthase (251 aa).

It belongs to the PqqC family.

The catalysed reaction is 6-(2-amino-2-carboxyethyl)-7,8-dioxo-1,2,3,4,7,8-hexahydroquinoline-2,4-dicarboxylate + 3 O2 = pyrroloquinoline quinone + 2 H2O2 + 2 H2O + H(+). It participates in cofactor biosynthesis; pyrroloquinoline quinone biosynthesis. Its function is as follows. Ring cyclization and eight-electron oxidation of 3a-(2-amino-2-carboxyethyl)-4,5-dioxo-4,5,6,7,8,9-hexahydroquinoline-7,9-dicarboxylic-acid to PQQ. The sequence is that of Pyrroloquinoline-quinone synthase from Pseudomonas putida (strain GB-1).